The primary structure comprises 266 residues: MDSAVDMADSERALNLTHIRFQLIRLEDTITFHLIERVQFPYNKTIYTPGAISIPDSKLSFFDWYFFQQEKLQSLIRRFESPDEYPYFPEAVQKPILKPLNYPKILHNNTVCVNDKIKKFYIEKFLPKVCPDFGREDRGEAQENYGSTSTCDIACLQALSRRIHFGKFVAESKFQSDPEYYTKLIQAEDREAIGESITNAAVEKQVLDRLRLKVETYGKDPSLLEGVEQPIKINVDAVVSMYKDFVIPLTKEVEVEYLMQRLIPEE.

A Chorismate mutase domain is found at 7–263 (MADSERALNL…EVEYLMQRLI (257 aa)). L-tyrosine-binding residues include Arg77, Arg78, Asn144, Gly146, Ser147, and Thr150. Residues Asn144, Gly146, and Ser147 each coordinate L-tryptophan.

In terms of assembly, homodimer.

The protein resides in the cytoplasm. It carries out the reaction chorismate = prephenate. It participates in metabolic intermediate biosynthesis; prephenate biosynthesis; prephenate from chorismate: step 1/1. With respect to regulation, each dimer has two allosteric binding sites that can bind the regulatory effectors tryptophan or tyrosine. Can bind either one tryptophan or one tyrosine, two tryptophan or two tyrosine or one tryptophan and one tyrosine, which differentially affect the catalytic activity. Activated by tryptophan and subject to feedback inhibition by tyrosine. In the presence of both tryptophan and tyrosine, the enzyme is in the activated state. Its function is as follows. Catalyzes the Claisen rearrangement of chorismate to prephenate. Acts at the first branch point in the aromatic amino acid pathway where it steers biosynthesis towards phenylalanine and tyrosine, and away from tryptophan. The protein is Chorismate mutase of Trichoderma parareesei (Filamentous fungus).